A 259-amino-acid polypeptide reads, in one-letter code: MAVISMKQLLEAGVHFGHQTRRWNPKMAKYIFTERNGIHVIDLQQTVKYADQAYDFMRDAAANDAVVLFVGTKKQAADAVAEEAVRSGQYFINHRWLGGTLTNWGTIQKRIARLKEIKRMEEDGTFEVLPKKEVALLNKQRTRLEKFLGGIEDMPRIPDVMYVVDPHKEQIAVKEAKKLGIPVVAMVDTNTDPDDIDVIIPANDDAIRAVKLITAKLADAIIEGRQGEDAVAVEAEFAASETQADSIEEIVEVVEGDNA.

Belongs to the universal ribosomal protein uS2 family.

This is Small ribosomal subunit protein uS2 from Streptococcus pneumoniae (strain CGSP14).